A 270-amino-acid polypeptide reads, in one-letter code: uncharacterized protein (270 aa).

The N-terminal stretch at 1-22 (MEYIKKIALYMSVLLLIIFIGG) is a signal peptide. The N-palmitoyl cysteine moiety is linked to residue Cys23. A lipid anchor (S-diacylglycerol cysteine) is attached at Cys23.

Belongs to the staphylococcal tandem lipoprotein family.

Its subcellular location is the cell membrane. This is an uncharacterized protein from Staphylococcus aureus (strain USA300).